Consider the following 459-residue polypeptide: Disease resistance protein CHL1 (459 aa).

The TIR domain occupies 16-170 (REVDVFLSFC…QIARDISLVV (155 aa)). The active site involves Glu-89. Residues 191–401 (VYDLLALEVN…LLKLKAKQGG (211 aa)) enclose the NB-ARC domain. Over residues 429–440 (ERKESSQDKSQQ) the composition is skewed to basic and acidic residues. Residues 429 to 459 (ERKESSQDKSQQESEVAADILIGKESSQDKQ) are disordered.

In terms of tissue distribution, mostly expressed in leaves, stems and roots, and, to a lower extent, in flowers and siliques.

The protein resides in the cytoplasm. The catalysed reaction is NAD(+) + H2O = ADP-D-ribose + nicotinamide + H(+). Confers resistance to low temperatures by limiting chloroplast damage and cell death, thus maintaining growth homeostasis. This chain is Disease resistance protein CHL1, found in Arabidopsis thaliana (Mouse-ear cress).